Consider the following 153-residue polypeptide: S-ribosylhomocysteine lyase (153 aa).

Fe cation contacts are provided by histidine 57, histidine 61, and cysteine 124.

The protein belongs to the LuxS family. As to quaternary structure, homodimer. Fe cation is required as a cofactor.

The catalysed reaction is S-(5-deoxy-D-ribos-5-yl)-L-homocysteine = (S)-4,5-dihydroxypentane-2,3-dione + L-homocysteine. Involved in the synthesis of autoinducer 2 (AI-2) which is secreted by bacteria and is used to communicate both the cell density and the metabolic potential of the environment. The regulation of gene expression in response to changes in cell density is called quorum sensing. Catalyzes the transformation of S-ribosylhomocysteine (RHC) to homocysteine (HC) and 4,5-dihydroxy-2,3-pentadione (DPD). This chain is S-ribosylhomocysteine lyase, found in Oceanobacillus iheyensis (strain DSM 14371 / CIP 107618 / JCM 11309 / KCTC 3954 / HTE831).